Here is a 393-residue protein sequence, read N- to C-terminus: NAD(P)H-quinone oxidoreductase subunit H, chloroplastic (393 aa).

It belongs to the complex I 49 kDa subunit family. In terms of assembly, NDH is composed of at least 16 different subunits, 5 of which are encoded in the nucleus.

It is found in the plastid. The protein resides in the chloroplast thylakoid membrane. The enzyme catalyses a plastoquinone + NADH + (n+1) H(+)(in) = a plastoquinol + NAD(+) + n H(+)(out). It catalyses the reaction a plastoquinone + NADPH + (n+1) H(+)(in) = a plastoquinol + NADP(+) + n H(+)(out). NDH shuttles electrons from NAD(P)H:plastoquinone, via FMN and iron-sulfur (Fe-S) centers, to quinones in the photosynthetic chain and possibly in a chloroplast respiratory chain. The immediate electron acceptor for the enzyme in this species is believed to be plastoquinone. Couples the redox reaction to proton translocation, and thus conserves the redox energy in a proton gradient. The protein is NAD(P)H-quinone oxidoreductase subunit H, chloroplastic of Calycanthus floridus var. glaucus (Eastern sweetshrub).